The chain runs to 649 residues: Threonine--tRNA ligase (649 aa).

Residues M1–T60 form the TGS domain. A catalytic region spans residues D248–P544. 3 residues coordinate Zn(2+): C341, H392, and H521.

Belongs to the class-II aminoacyl-tRNA synthetase family. As to quaternary structure, homodimer. Zn(2+) is required as a cofactor.

The protein resides in the cytoplasm. The catalysed reaction is tRNA(Thr) + L-threonine + ATP = L-threonyl-tRNA(Thr) + AMP + diphosphate + H(+). Functionally, catalyzes the attachment of threonine to tRNA(Thr) in a two-step reaction: L-threonine is first activated by ATP to form Thr-AMP and then transferred to the acceptor end of tRNA(Thr). Also edits incorrectly charged L-seryl-tRNA(Thr). The protein is Threonine--tRNA ligase of Deinococcus geothermalis (strain DSM 11300 / CIP 105573 / AG-3a).